A 383-amino-acid polypeptide reads, in one-letter code: Probable purine permease 16 (383 aa).

10 consecutive transmembrane segments (helical) span residues 30 to 50 (ISVFICGFLIFAGDSLVMLLL), 72 to 92 (WTQALIQNAAFPILIPFFFIL), 113 to 133 (VLSLYVSLGVLVSVYSKLYAL), 138 to 158 (VGWGILLSTQLILTSLFSAFI), 166 to 186 (WIIISIIFTLGADFFGGPAFA), 203 to 223 (LILIFPTLAFSLSLCLMQLGF), 247 to 267 (ICVSFIATLICTVGLFASGEF), 297 to 317 (VWAVGLLGLVLLVSGLFADVV), 322 to 342 (SPVVALLVVLAFDFMDDEFGW), and 346 to 363 (GALLGAVLALASYFYSLH).

It belongs to the purine permeases (TC 2.A.7.14) family.

It is found in the membrane. This Arabidopsis thaliana (Mouse-ear cress) protein is Probable purine permease 16 (PUP16).